A 1226-amino-acid polypeptide reads, in one-letter code: Methionine synthase (1226 aa).

The Hcy-binding domain maps to 7-327; that stretch reads KVQIEKQLSE…EHIRQMALVV (321 aa). Positions 249, 312, and 313 each coordinate Zn(2+). The 262-residue stretch at 358 to 619 folds into the Pterin-binding domain; that stretch reads FINVGERTNV…VPEDLREAVE (262 aa). The B12-binding N-terminal domain occupies 652-746; it reads SALEWRDWPV…FINASKEVGA (95 aa). Residues glutamate 696, 758–762, histidine 761, serine 806, threonine 810, and alanine 862 each bind methylcob(III)alamin; that span reads GDVHD. The B12-binding domain occupies 748-883; the sequence is NGKILLATVK…SNELKPSFVE (136 aa). The AdoMet activation domain maps to 899–1226; it reads KQPRTKPVTL…AEKWLGPNLN (328 aa). Residues aspartate 949, arginine 1137, and 1192-1193 each bind S-adenosyl-L-methionine; that span reads YF.

The protein belongs to the vitamin-B12 dependent methionine synthase family. Methylcob(III)alamin is required as a cofactor. Requires Zn(2+) as cofactor.

It carries out the reaction (6S)-5-methyl-5,6,7,8-tetrahydrofolate + L-homocysteine = (6S)-5,6,7,8-tetrahydrofolate + L-methionine. It functions in the pathway amino-acid biosynthesis; L-methionine biosynthesis via de novo pathway; L-methionine from L-homocysteine (MetH route): step 1/1. Functionally, catalyzes the transfer of a methyl group from methyl-cobalamin to homocysteine, yielding enzyme-bound cob(I)alamin and methionine. Subsequently, remethylates the cofactor using methyltetrahydrofolate. The sequence is that of Methionine synthase (metH) from Aliivibrio fischeri (Vibrio fischeri).